Reading from the N-terminus, the 501-residue chain is Maturase K (501 aa).

Belongs to the intron maturase 2 family. MatK subfamily.

It localises to the plastid. It is found in the chloroplast. Functionally, usually encoded in the trnK tRNA gene intron. Probably assists in splicing its own and other chloroplast group II introns. This chain is Maturase K, found in Amborella trichopoda.